The sequence spans 126 residues: Small ribosomal subunit protein bS6 (126 aa).

It belongs to the bacterial ribosomal protein bS6 family.

Binds together with bS18 to 16S ribosomal RNA. This is Small ribosomal subunit protein bS6 from Actinobacillus succinogenes (strain ATCC 55618 / DSM 22257 / CCUG 43843 / 130Z).